The chain runs to 305 residues: Glycine betaine-binding protein YehZ (305 aa).

An N-terminal signal peptide occupies residues 1–23 (MPLLKLWAGSLVMLAAVSLPLQA).

The protein belongs to the OsmX family. In terms of assembly, the complex is composed of two ATP-binding proteins (YehX), two transmembrane proteins (YehW and YehY) and a solute-binding protein (YehZ).

The protein resides in the periplasm. In terms of biological role, part of an ABC transporter complex involved in low-affinity glycine betaine uptake. Binds glycine betaine with low affinity. This chain is Glycine betaine-binding protein YehZ (yehZ), found in Escherichia coli (strain K12).